The following is a 449-amino-acid chain: Heterogeneous nuclear ribonucleoprotein H (449 aa).

N-acetylmethionine; in Heterogeneous nuclear ribonucleoprotein H; alternate is present on Met-1. An N-acetylmethionine; in Heterogeneous nuclear ribonucleoprotein H, N-terminally processed modification is found at Met-2. An RRM 1 domain is found at 11–90 (FVVKVRGLPW…RYVEVFKSNN (80 aa)). Position 23 is a phosphoserine (Ser-23). Lys-35 participates in a covalent cross-link: Glycyl lysine isopeptide (Lys-Gly) (interchain with G-Cter in SUMO2). Residues Ser-54 and Ser-63 each carry the phosphoserine modification. Glycyl lysine isopeptide (Lys-Gly) (interchain with G-Cter in SUMO2) cross-links involve residues Lys-87 and Lys-98. The RRM 2 domain maps to 111–188 (GFVRLRGLPF…RYIEIFKSSR (78 aa)). Dimethylated arginine; alternate is present on Arg-233. Arg-233 carries the omega-N-methylarginine; alternate modification. Residues 234–249 (GAYGGGYGGYDDYNGY) form a 1-1 repeat. The 2 X 16 AA Gly-rich approximate repeats stretch occupies residues 234–433 (GAYGGGYGGY…YGGQSSMSGY (200 aa)). A Phosphotyrosine modification is found at Tyr-246. One can recognise an RRM 3 domain in the interval 289 to 364 (HCVHMRGLPY…RYVELFLNST (76 aa)). Ser-310 is subject to Phosphoserine. Tandem repeats lie at residues 354–372 (HRYV…GGAY), 374–392 (HRYV…GGAY), and 418–433 (GGYG…MSGY). The tract at residues 354 to 392 (HRYVELFLNSTAGASGGAYEHRYVELFLNSTAGASGGAY) is 2 X 19 AA perfect repeats.

As to quaternary structure, part of a ternary complex containing FUBP2, PTBP1, PTBP2 and HNRNPH1. Identified in the spliceosome C complex. Interacts with IGF2BP1. Interacts with CUGBP1; the interaction is RNA-dependent. Interacts with MBNL1; the interaction in RNA-independent. In terms of tissue distribution, expressed ubiquitously.

Its subcellular location is the nucleus. It is found in the nucleoplasm. This protein is a component of the heterogeneous nuclear ribonucleoprotein (hnRNP) complexes which provide the substrate for the processing events that pre-mRNAs undergo before becoming functional, translatable mRNAs in the cytoplasm. Mediates pre-mRNA alternative splicing regulation. Inhibits, together with CUGBP1, insulin receptor (IR) pre-mRNA exon 11 inclusion in myoblast. Binds to the IR RNA. Binds poly(RG). The polypeptide is Heterogeneous nuclear ribonucleoprotein H (HNRNPH1) (Homo sapiens (Human)).